Consider the following 270-residue polypeptide: Regulatory protein RecX (270 aa).

This sequence belongs to the RecX family.

The protein localises to the cytoplasm. In terms of biological role, modulates RecA activity. The polypeptide is Regulatory protein RecX (Bacillus cereus (strain G9842)).